A 105-amino-acid polypeptide reads, in one-letter code: Large ribosomal subunit protein uL24 (105 aa).

It belongs to the universal ribosomal protein uL24 family. In terms of assembly, part of the 50S ribosomal subunit.

Functionally, one of two assembly initiator proteins, it binds directly to the 5'-end of the 23S rRNA, where it nucleates assembly of the 50S subunit. Its function is as follows. One of the proteins that surrounds the polypeptide exit tunnel on the outside of the subunit. The chain is Large ribosomal subunit protein uL24 from Mycolicibacterium vanbaalenii (strain DSM 7251 / JCM 13017 / BCRC 16820 / KCTC 9966 / NRRL B-24157 / PYR-1) (Mycobacterium vanbaalenii).